A 380-amino-acid polypeptide reads, in one-letter code: MIAGSKLLMLGLFGALAVHALPEPAKAQVTAAPKLEERATSCTFSGSAGASSASKSKTACATIVLSAVAVPSGTTLDLTGLNDGTTVIFEGETTFGYKEWSGPLVSVSGTDITVKGASGATLNGDGSRWWDGKGSNGGKTKPKFFYAHKMFSSTISDIHIVNSPVQVFSINGATDLTLSGITVDNRDGDTDEGGHNTDAFDVGSSTGITITGATVYNQDDCLAVNSGTDITFTGGLCSGGHGLSIGSVGGRSNNDVANVIIENSQIQDSTNGVRIKTVYEATGSVKNVTYKDITLSGITKYGIVIEQDYENGSPTGTPTDGVPITDLTLDGVKGTVASSGTNVYILCAEGACSDWTWDGVSVSGGKTSSACENVPSSASC.

The first 20 residues, 1-20 (MIAGSKLLMLGLFGALAVHA), serve as a signal peptide directing secretion. Positions 21-38 (LPEPAKAQVTAAPKLEER) are excised as a propeptide. C42 and C60 are oxidised to a cystine. 2 PbH1 repeats span residues 173-204 (ATDL…DVGS) and 205-226 (STGI…AVNS). The Proton donor role is filled by D219. Residues C221 and C237 are joined by a disulfide bond. Residue H241 is part of the active site. 3 PbH1 repeats span residues 256-277 (VANV…RIKT), 285-307 (VKNV…VIEQ), and 319-364 (TDGV…SVSG). N287 is a glycosylation site (N-linked (GlcNAc...) asparagine). Disulfide bonds link C347/C352 and C371/C380.

This sequence belongs to the glycosyl hydrolase 28 family.

It localises to the secreted. It catalyses the reaction (1,4-alpha-D-galacturonosyl)n+m + H2O = (1,4-alpha-D-galacturonosyl)n + (1,4-alpha-D-galacturonosyl)m.. In Penicillium olsonii, this protein is Polygalacturonase 2 (PG2).